The sequence spans 138 residues: Small ribosomal subunit protein uS11c (138 aa).

The tract at residues 1-25 is disordered; the sequence is MAKSIPRTGSRRNVRSGSRKSTRRI. A compositionally biased stretch (basic residues) spans 9–25; it reads GSRRNVRSGSRKSTRRI.

This sequence belongs to the universal ribosomal protein uS11 family. As to quaternary structure, part of the 30S ribosomal subunit.

The protein resides in the plastid. Its subcellular location is the chloroplast. This chain is Small ribosomal subunit protein uS11c, found in Eucalyptus globulus subsp. globulus (Tasmanian blue gum).